A 525-amino-acid polypeptide reads, in one-letter code: MDYQYFEEESDYIDLDEEEEDDDVVTAGSLDHRFGQPNGEEDYYFGGDDVEEELVVDGHGVLELAGRLLESLQSCVQPSVLQVMQYVAPMLLLCLLCRLLCLLYSQRRRLTSLAPLHLFHFACGLIILQITVGYRLLLLLLLAAVGYLLLQLLRLGRRGAQVLAVLTVGSQFLYELLIWRRRSDWPQLRGIQMVVNMKLISLGFDLTASGQLQARIPGPFAYLGYIYSPATCALGPWVSFGCYMDCLVPRNSWLVSLRRLLPNVVICVLAVTVSNCVAPALSDFFGDSSHFLVMYWDALSVRSSHYFVGMMAQALLVASDQRLDGATKESDMLGPLISQPWRIEWPRSISSLVRSWNIPMHEWLKRYIYAPCKPTASTSRGRILVVVLSTYLVSSLLHGMDLRIYLVLISLAFLAEGESLLRRQLASLLNACITANLCPGKERCRYSHCPSKRRLNSLSYWLARLTNLAFTALAIFHLAYLGVVLLGDDLEVGEDGDSFLWHWQQAGYLSHYIGLGTFVLYLFIS.

The next 9 helical transmembrane spans lie at 83–103 (VMQY…LCLL), 125–145 (LIIL…LAAV), 159–179 (GAQV…LLIW), 220–240 (FAYL…WVSF), 260–280 (LLPN…VAPA), 301–318 (VRSS…LLVA), 395–415 (SLLH…AFLA), 467–487 (NLAF…VLLG), and 505–525 (QAGY…LFIS). Histidine 398 is an active-site residue.

Belongs to the membrane-bound acyltransferase family. Porcupine subfamily. In terms of assembly, interacts with wg and Wnt5.

Its subcellular location is the endoplasmic reticulum membrane. It catalyses the reaction [Wnt protein]-L-serine + (9Z)-hexadecenoyl-CoA = [Wnt protein]-O-(9Z)-hexadecenoyl-L-serine + CoA. Functionally, protein-serine O-palmitoleoyltransferase that acts as a key regulator of the Wnt signaling pathway by mediating the attachment of palmitoleate, a 16-carbon monounsaturated fatty acid (C16:1(9Z)), to Wnt proteins. Serine palmitoleoylation of Wnt proteins is required for efficient binding to frizzled receptors. Also facilitates the glycosylation of Wnt family members, including wg and Wnt5. The cotranslational disulfide bond formation of wg competes with the N-glycosylation. Porc stimulates the post-translational N-glycosylation by anchoring wg at the ER membrane, probably through acylation. This is Protein-serine O-palmitoleoyltransferase porcupine from Drosophila melanogaster (Fruit fly).